Consider the following 350-residue polypeptide: 3-isopropylmalate dehydrogenase (350 aa).

76–87 provides a ligand contact to NAD(+); sequence GPKWDNAPKRPE. Residues Arg-94, Arg-104, Arg-132, and Asp-217 each coordinate substrate. Residues Asp-217, Asp-241, and Asp-245 each contribute to the Mg(2+) site. An NAD(+)-binding site is contributed by 275 to 287; sequence GSAPDIANQNIAN.

It belongs to the isocitrate and isopropylmalate dehydrogenases family. LeuB type 1 subfamily. In terms of assembly, homodimer. Mg(2+) is required as a cofactor. Mn(2+) serves as cofactor.

The protein localises to the cytoplasm. It carries out the reaction (2R,3S)-3-isopropylmalate + NAD(+) = 4-methyl-2-oxopentanoate + CO2 + NADH. The protein operates within amino-acid biosynthesis; L-leucine biosynthesis; L-leucine from 3-methyl-2-oxobutanoate: step 3/4. Functionally, catalyzes the oxidation of 3-carboxy-2-hydroxy-4-methylpentanoate (3-isopropylmalate) to 3-carboxy-4-methyl-2-oxopentanoate. The product decarboxylates to 4-methyl-2 oxopentanoate. This Listeria monocytogenes serovar 1/2a (strain ATCC BAA-679 / EGD-e) protein is 3-isopropylmalate dehydrogenase.